The sequence spans 251 residues: Developmental protein SEPALLATA 1 (251 aa).

Residues 3 to 57 (RGRVELKRIENKINRQVTFAKRRNGLLKKAYELSVLCDAEVALIIFSNRGKLYEF) enclose the MADS-box domain. Residues 85-176 (AKELENSYRE…ALAMKLDDMI (92 aa)) adopt a coiled-coil conformation. Residues 88-178 (LENSYREYLK…AMKLDDMIGV (91 aa)) form the K-box domain.

As to quaternary structure, heterodimer with AGAMOUS capable of binding to CArG-box sequences. Interacts with AGL16. Interacts with TT16/AGL32. Expressed mainly in carpels, and weakly in stamens.

It is found in the nucleus. Probable transcription factor. Functions with SEPALLATA2/AGL4 and SEPALLATA3/AGL9 to ensure proper development of petals, stamens and carpels, and to prevent the indeterminate growth of the flower meristem. Forms a heterodimer via the K-box domain with AGAMOUS, that could be involved in genes regulation during floral meristem development. The chain is Developmental protein SEPALLATA 1 (SEP1) from Arabidopsis thaliana (Mouse-ear cress).